A 174-amino-acid polypeptide reads, in one-letter code: Peptide methionine sulfoxide reductase MsrA (174 aa).

Residue cysteine 10 is part of the active site.

This sequence belongs to the MsrA Met sulfoxide reductase family.

It catalyses the reaction L-methionyl-[protein] + [thioredoxin]-disulfide + H2O = L-methionyl-(S)-S-oxide-[protein] + [thioredoxin]-dithiol. It carries out the reaction [thioredoxin]-disulfide + L-methionine + H2O = L-methionine (S)-S-oxide + [thioredoxin]-dithiol. Its function is as follows. Has an important function as a repair enzyme for proteins that have been inactivated by oxidation. Catalyzes the reversible oxidation-reduction of methionine sulfoxide in proteins to methionine. This chain is Peptide methionine sulfoxide reductase MsrA, found in Pseudarthrobacter chlorophenolicus (strain ATCC 700700 / DSM 12829 / CIP 107037 / JCM 12360 / KCTC 9906 / NCIMB 13794 / A6) (Arthrobacter chlorophenolicus).